The chain runs to 226 residues: Cytidylate kinase (226 aa).

10-18 (GPASSGKST) contributes to the ATP binding site.

The protein belongs to the cytidylate kinase family. Type 1 subfamily.

Its subcellular location is the cytoplasm. It catalyses the reaction CMP + ATP = CDP + ADP. The enzyme catalyses dCMP + ATP = dCDP + ADP. This chain is Cytidylate kinase, found in Streptococcus pyogenes serotype M4 (strain MGAS10750).